An 84-amino-acid polypeptide reads, in one-letter code: Toxin To7 (84 aa).

An N-terminal signal peptide occupies residues 1–20; sequence MSIFPIVLALLLIGLEETEA. Positions 21–83 constitute an LCN-type CS-alpha/beta domain; that stretch reads LDGYPLSKIN…KMYPGSSPCY (63 aa). Cystine bridges form between Cys32–Cys82, Cys36–Cys59, Cys42–Cys64, and Cys46–Cys66.

Expressed by the venom gland.

The protein localises to the secreted. Its function is as follows. Inhibits voltage-gated sodium channels (Nav). In Tityus obscurus (Amazonian scorpion), this protein is Toxin To7.